The chain runs to 563 residues: Rhotekin (563 aa).

Arg14 bears the Omega-N-methylarginine mark. Residues 17–98 (ALEMEFKRGR…LQRRKEAQVL (82 aa)) enclose the REM-1 domain. Phosphoserine is present on residues Ser30 and Ser106. The interval 96–116 (QVLGKTSRRPSDSGPPAERSP) is disordered. Arg230 carries the asymmetric dimethylarginine modification. Position 232 is a phosphoserine (Ser232). In terms of domain architecture, PH spans 309 to 416 (QPTASGTLRV…WMEALWQLFF (108 aa)). The interval 518-563 (TFSLDAVPPDHSPRARSVAPLPPQRSPRTRGLCSKGQPRTWLQSPV) is disordered. Ser520, Ser529, and Ser543 each carry phosphoserine.

Interacts via its C-terminal region with the TAX1BP3 PDZ domain. This interaction facilitates Rho-mediated activation of the c-Fos serum response element (SRE). Interacts with SEPT9. Specifically binds to GTP-bound RHOA, RHOB and RHOC and inhibits their GTPase activity. Highly expressed in prostate, moderately in kidney, heart, brain, spleen, testis, placenta, small intestine, pancreas, skeletal muscle and peripheral blood leukocytes, and weakly in ovary, colon and thymus. Weakly expressed in all normal cell lines tested. Overexpressed in various cancer cell lines.

In terms of biological role, mediates Rho signaling to activate NF-kappa-B and may confer increased resistance to apoptosis to cells in gastric tumorigenesis. May play a novel role in the organization of septin structures. The chain is Rhotekin from Homo sapiens (Human).